A 149-amino-acid chain; its full sequence is Transcriptional regulator MraZ (149 aa).

2 SpoVT-AbrB domains span residues 5–52 (ITTL…PLPE) and 81–124 (AEEC…DSMV).

Belongs to the MraZ family. Forms oligomers.

The protein resides in the cytoplasm. It is found in the nucleoid. The polypeptide is Transcriptional regulator MraZ (Nitrosococcus oceani (strain ATCC 19707 / BCRC 17464 / JCM 30415 / NCIMB 11848 / C-107)).